The chain runs to 694 residues: Cyclic nucleotide-gated channel alpha-3 (694 aa).

Composition is skewed to polar residues over residues M1–P11 and S112–S123. Disordered stretches follow at residues M1–D24 and E109–K152. Residues M1–R170 lie on the Cytoplasmic side of the membrane. A helical transmembrane segment spans residues W171–F192. Residues D193–E198 lie on the Extracellular side of the membrane. A helical transmembrane segment spans residues Y199 to L219. Residues V220–T246 are Cytoplasmic-facing. Residues T247 to V266 traverse the membrane as a helical segment. Residues G267–Y270 are Extracellular-facing. A helical transmembrane segment spans residues P271–F288. At D289–P298 the chain is on the cytoplasmic side. The interval P298–M406 is ion conduction pathway. The helical transmembrane segment at N299–Y321 threads the bilayer. The Extracellular portion of the chain corresponds to F322 to R347. N339 carries N-linked (GalNAc...) asparagine glycosylation. 2 helical membrane passes run L348–Y378 and L379–I403. A selectivity filter region spans residues T365–E368. The Cytoplasmic segment spans residues S404 to Q694. Positions A408 to D485 are C-linker. The segment at A488–K608 is cyclic nucleotide-binding domain. 6 residues coordinate 3',5'-cyclic GMP: G548, E549, S551, R564, T565, and D609. Positions L626–V669 form a coiled coil. Residues L662–Q694 form a disordered region.

The protein belongs to the cyclic nucleotide-gated cation channel (TC 1.A.1.5) family. CNGA3 subfamily. As to quaternary structure, forms heterotetrameric channels composed of CNGA3 and CNGB3 subunits with 3:1 stoichiometry. In terms of tissue distribution, prominently expressed in retina.

The protein resides in the cell membrane. The catalysed reaction is Ca(2+)(in) = Ca(2+)(out). It carries out the reaction Na(+)(in) = Na(+)(out). It catalyses the reaction K(+)(in) = K(+)(out). The enzyme catalyses NH4(+)(in) = NH4(+)(out). The catalysed reaction is Rb(+)(in) = Rb(+)(out). It carries out the reaction Li(+)(in) = Li(+)(out). It catalyses the reaction Cs(+)(in) = Cs(+)(out). Its activity is regulated as follows. Inhibited by L-cis-diltiazem. Functionally, pore-forming subunit of the cone cyclic nucleotide-gated channel. Mediates cone photoresponses at bright light converting transient changes in intracellular cGMP levels into electrical signals. In the dark, cGMP levels are high and keep the channel open enabling a steady inward current carried by Na(+) and Ca(2+) ions that leads to membrane depolarization and neurotransmitter release from synaptic terminals. Upon photon absorption cGMP levels decline leading to channel closure and membrane hyperpolarization that ultimately slows neurotransmitter release and signals the presence of light, the end point of the phototransduction cascade. Pore-forming subunit of the gustatory cyclic nucleotide-gated channel. In the taste buds, may sense oral extracellular pH and conduct ion currents that modulate the excitability of taste cells. Conducts cGMP- and cAMP-gated ion currents, with permeability for monovalent and divalent cations. This chain is Cyclic nucleotide-gated channel alpha-3, found in Homo sapiens (Human).